The primary structure comprises 449 residues: Putative tartrate transporter (449 aa).

The next 11 membrane-spanning stretches (helical) occupy residues Ile34 to Phe54, Gly64 to Phe84, Ile99 to Gln119, Leu130 to Phe150, Ala156 to Ile176, Trp194 to Leu214, Val259 to Trp279, Ile292 to Trp312, Gly336 to Val356, Leu367 to Ile387, and Gly414 to Ala434.

This sequence belongs to the major facilitator superfamily. Phthalate permease family.

Its subcellular location is the cell membrane. In terms of biological role, component of the tartrate utilization system and may allow entry of tartrate and tartrate dehydrogenase. This Agrobacterium vitis (Rhizobium vitis) protein is Putative tartrate transporter (ttuB).